The primary structure comprises 740 residues: ATP-dependent RNA helicase DDX1 (740 aa).

Residues 1 to 295 (MAAFSEMGVM…APKALIVEPS (295 aa)) are necessary for interaction with HNRNPK. Positions 1–448 (MAAFSEMGVM…DTVHHVVVPV (448 aa)) are interaction with dsRNA. Positions 1-525 (MAAFSEMGVM…KIDCDNLEQY (525 aa)) are necessary for interaction with RELA. The 427-residue stretch at 2 to 428 (AAFSEMGVMP…SEKIMHFPTW (427 aa)) folds into the Helicase ATP-binding domain. 46 to 53 (AETGSGKT) provides a ligand contact to ATP. The 178-residue stretch at 70 to 247 (DQQEGKKGKT…LKFNFGEEEF (178 aa)) folds into the B30.2/SPRY domain. N6-acetyllysine is present on residues Lys239 and Lys268. An N6-acetyllysine; alternate modification is found at Lys281. A Glycyl lysine isopeptide (Lys-Gly) (interchain with G-Cter in SUMO2); alternate cross-link involves residue Lys281. The DEAD box signature appears at 370 to 373 (DEAD). Ser481 carries the phosphoserine modification. The region spanning 493-681 (KGEYAVRAIK…QVEPDIKVPV (189 aa)) is the Helicase C-terminal domain. The segment at 525–740 (YFMQQGGGPD…YLPNQLFRTF (216 aa)) is necessary for interaction with HNRNPK.

It belongs to the DEAD box helicase family. DDX1 subfamily. Found in a multi-helicase-TICAM1 complex at least composed of DHX36, DDX1, DDX21 and TICAM1; this complex exists in resting cells with or without poly(I:C) RNA ligand stimulation. Interacts with DHX36. Interacts (via B30.2/SPRY domain) with DDX21 (via N-terminus); this interaction serves as bridges to TICAM1. Interacts with FAM98A (via N- and C-terminus). Interacts with MBNL1. Interacts with CSTF2. Interacts with HNRNPK. Interacts with ATM. Interacts with RELA (via C-terminus). Component of the tRNA-splicing ligase complex. Interacts with PHF5A (via C-terminus). Interacts with PQBP1. Interacts with ERCC6. Phosphorylated by ATM kinase; phosphorylation is increased in response to ionizing radiation (IR). In terms of tissue distribution, testis-specific. Expressed in the germ line stem cells, spermatogonia and spermatocytes of the testis. Also expressed in the seminoma and nonseminoma types of testicular germ cell tumors (TGCTs) (at protein level).

The protein resides in the nucleus. The protein localises to the cytoplasm. It is found in the cytosol. Its subcellular location is the cytoplasmic granule. It localises to the mitochondrion. The catalysed reaction is ATP + H2O = ADP + phosphate + H(+). Its function is as follows. Acts as an ATP-dependent RNA helicase, able to unwind both RNA-RNA and RNA-DNA duplexes. Possesses 5' single-stranded RNA overhang nuclease activity. Possesses ATPase activity on various RNA, but not DNA polynucleotides. May play a role in RNA clearance at DNA double-strand breaks (DSBs), thereby facilitating the template-guided repair of transcriptionally active regions of the genome. Together with RELA, acts as a coactivator to enhance NF-kappa-B-mediated transcriptional activation. Acts as a positive transcriptional regulator of cyclin CCND2 expression. Binds to the cyclin CCND2 promoter region. Associates with chromatin at the NF-kappa-B promoter region via association with RELA. Binds to poly(A) RNA. May be involved in 3'-end cleavage and polyadenylation of pre-mRNAs. Component of the tRNA-splicing ligase complex required to facilitate the enzymatic turnover of catalytic subunit RTCB: together with archease (ZBTB8OS), acts by facilitating the guanylylation of RTCB, a key intermediate step in tRNA ligation. Component of a multi-helicase-TICAM1 complex that acts as a cytoplasmic sensor of viral double-stranded RNA (dsRNA) and plays a role in the activation of a cascade of antiviral responses including the induction of pro-inflammatory cytokines via the adapter molecule TICAM1. Specifically binds (via helicase ATP-binding domain) on both short and long poly(I:C) dsRNA. The sequence is that of ATP-dependent RNA helicase DDX1 (Ddx1) from Mus musculus (Mouse).